The sequence spans 392 residues: Chaperone protein DnaJ 2 (392 aa).

The J domain occupies 10–75; it reads DFYKELGVSS…AKRKEYDETR (66 aa). Residues 161-239 form a CR-type zinc finger; that stretch reads GVAMPLRLTS…CKGTGVTTRT (79 aa). Cys174, Cys177, Cys191, Cys194, Cys213, Cys216, Cys227, and Cys230 together coordinate Zn(2+). CXXCXGXG motif repeat units follow at residues 174–181, 191–198, 213–220, and 227–234; these read CTNCHGSG, CPTCNGSG, CTDCRGSG, and CDECKGTG.

The protein belongs to the DnaJ family. Homodimer. Zn(2+) serves as cofactor.

It localises to the cytoplasm. In terms of biological role, participates actively in the response to hyperosmotic and heat shock by preventing the aggregation of stress-denatured proteins and by disaggregating proteins, also in an autonomous, DnaK-independent fashion. Unfolded proteins bind initially to DnaJ; upon interaction with the DnaJ-bound protein, DnaK hydrolyzes its bound ATP, resulting in the formation of a stable complex. GrpE releases ADP from DnaK; ATP binding to DnaK triggers the release of the substrate protein, thus completing the reaction cycle. Several rounds of ATP-dependent interactions between DnaJ, DnaK and GrpE are required for fully efficient folding. Also involved, together with DnaK and GrpE, in the DNA replication of plasmids through activation of initiation proteins. This is Chaperone protein DnaJ 2 from Mycolicibacterium paratuberculosis (strain ATCC BAA-968 / K-10) (Mycobacterium paratuberculosis).